Consider the following 315-residue polypeptide: Homoserine kinase (315 aa).

Position 96–106 (96–106 (PHSRGLGSSAA)) interacts with ATP.

It belongs to the GHMP kinase family. Homoserine kinase subfamily.

The protein localises to the cytoplasm. It carries out the reaction L-homoserine + ATP = O-phospho-L-homoserine + ADP + H(+). It functions in the pathway amino-acid biosynthesis; L-threonine biosynthesis; L-threonine from L-aspartate: step 4/5. Catalyzes the ATP-dependent phosphorylation of L-homoserine to L-homoserine phosphate. This is Homoserine kinase from Mycobacterium leprae (strain Br4923).